Reading from the N-terminus, the 188-residue chain is Elongation factor P (188 aa).

Residue Lys34 is modified to N6-(3,6-diaminohexanoyl)-5-hydroxylysine.

Belongs to the elongation factor P family. Post-translationally, is beta-lysylated on the epsilon-amino group of Lys-34 by the combined action of EpmA and EpmB, and then hydroxylated on the C5 position of the same residue by EpmC. Lysylation is critical for the stimulatory effect of EF-P on peptide-bond formation. The lysylation moiety would extend toward the peptidyltransferase center and stabilize the terminal 3-CCA end of the tRNA. The hydroxylation of the C5 position on Lys-34 would allow additional potential stabilizing hydrogen-bond interactions with the P-tRNA.

The protein resides in the cytoplasm. The protein operates within protein biosynthesis; polypeptide chain elongation. Involved in peptide bond synthesis. Alleviates ribosome stalling that occurs when 3 or more consecutive Pro residues or the sequence PPG is present in a protein, possibly by augmenting the peptidyl transferase activity of the ribosome. Modification of Lys-34 is required for alleviation. In Salmonella arizonae (strain ATCC BAA-731 / CDC346-86 / RSK2980), this protein is Elongation factor P.